We begin with the raw amino-acid sequence, 635 residues long: Very-long-chain aldehyde decarbonylase GL1-6 (635 aa).

The next 4 helical transmembrane spans lie at L46–I66, I100–A120, G127–H147, and V183–S203. In terms of domain architecture, Fatty acid hydroxylase spans V139–T273.

This sequence belongs to the sterol desaturase family. Homodimer.

The protein localises to the endoplasmic reticulum membrane. It catalyses the reaction a long-chain fatty aldehyde + 2 NADPH + O2 + H(+) = a long-chain alkane + formate + 2 NADP(+) + H2O. In terms of biological role, aldehyde decarbonylase involved in the conversion of aldehydes to alkanes. Core component of a very-long-chain alkane synthesis complex. The polypeptide is Very-long-chain aldehyde decarbonylase GL1-6 (Oryza sativa subsp. indica (Rice)).